The following is a 150-amino-acid chain: MSLHFNSIGFLLVVLALLGVLGNNSSITISATVLLLMQQTFLSKYIPVMEKYGLNIGVIILTIGVLSPIVAGKVKIPALTELLHWKMFLSLVVGMLVAWLAGRGVSLMGSQPVLLTGLLIGTILGVGLLGGIPVGPLIAAGILSLLLGKV.

Transmembrane regions (helical) follow at residues 1-21 (MSLH…LGVL), 52-72 (YGLN…IVAG), 82-102 (LLHW…WLAG), and 123-143 (ILGV…AGIL).

It belongs to the UPF0756 family.

The protein resides in the cell membrane. The polypeptide is UPF0756 membrane protein Asuc_1151 (Actinobacillus succinogenes (strain ATCC 55618 / DSM 22257 / CCUG 43843 / 130Z)).